The chain runs to 61 residues: Photosystem II reaction center protein K (61 aa).

Positions Met1–Asp24 are excised as a propeptide. A helical membrane pass occupies residues Ile36 to Ala56.

Belongs to the PsbK family. In terms of assembly, PSII is composed of 1 copy each of membrane proteins PsbA, PsbB, PsbC, PsbD, PsbE, PsbF, PsbH, PsbI, PsbJ, PsbK, PsbL, PsbM, PsbT, PsbX, PsbY, PsbZ, Psb30/Ycf12, at least 3 peripheral proteins of the oxygen-evolving complex and a large number of cofactors. It forms dimeric complexes.

It localises to the plastid. It is found in the chloroplast thylakoid membrane. One of the components of the core complex of photosystem II (PSII). PSII is a light-driven water:plastoquinone oxidoreductase that uses light energy to abstract electrons from H(2)O, generating O(2) and a proton gradient subsequently used for ATP formation. It consists of a core antenna complex that captures photons, and an electron transfer chain that converts photonic excitation into a charge separation. This chain is Photosystem II reaction center protein K, found in Lotus japonicus (Lotus corniculatus var. japonicus).